The chain runs to 321 residues: MGAFALFAVLAMAVTMAVAEQCGSQAGGATCPNCLCCSRFGWCGSTSDYCGDGCQSQCAGCGGGGTPVTPTPTPSGGGGVSSIVSRALFDRMLLHRNDGACQAKGFYTYDAFVAAAGAFPGFGTTGSTDTRKREVAAFLAQTSHETTGGWATAPDGAFAWGYCFKQERGATSNYCTPSAQWPCAPGKSYYGRGPIQLSHNYNYGPAGRAIGVDLLRNPDLVATDPTVSFKTAMWFWMTAQAPKPSSHAVITGQWSPSGTDRAAGRVPGFGVITNIVNGGIECGHGQDSRVADRIGFYKRYCDILRVGYGNNLDCYNQRPFA.

An N-terminal signal peptide occupies residues 1–19; that stretch reads MGAFALFAVLAMAVTMAVA. A Chitin-binding type-1 domain is found at 20-60; the sequence is EQCGSQAGGATCPNCLCCSRFGWCGSTSDYCGDGCQSQCAG. 5 disulfides stabilise this stretch: cysteine 22–cysteine 37, cysteine 31–cysteine 43, cysteine 34–cysteine 61, cysteine 36–cysteine 50, and cysteine 54–cysteine 58. The segment at 62–79 is hinge region (Gly/Pro/Thr-rich); the sequence is GGGGTPVTPTPTPSGGGG. Residues 80 to 321 form a catalytic region; that stretch reads VSSIVSRALF…LDCYNQRPFA (242 aa). Intrachain disulfides connect cysteine 101-cysteine 163, cysteine 175-cysteine 183, and cysteine 301-cysteine 314. The active-site Proton donor is glutamate 145.

The protein belongs to the glycosyl hydrolase 19 family. Chitinase class I subfamily. As to expression, localized in the aleurone cells of the seed endosperm (at protein level).

The catalysed reaction is Random endo-hydrolysis of N-acetyl-beta-D-glucosaminide (1-&gt;4)-beta-linkages in chitin and chitodextrins.. Defense against chitin-containing fungal pathogens. Binds the hyphal tips, lateral walls and septa of fungi and degrades mature chitin. The chain is Basic endochitinase A from Secale cereale (Rye).